The primary structure comprises 423 residues: Glutaminase (423 aa).

The segment at 27-312 is glutaminase; that stretch reads GEVAQYIPQL…LSEDMGLHLM (286 aa). Residues Ser-69, Asn-119, Glu-165, Asn-172, Tyr-196, Tyr-248, and Val-266 each coordinate substrate. The STAS domain maps to 321–423; the sequence is AVRAIEERGD…SPQVDDPEEL (103 aa).

The protein belongs to the glutaminase family. As to quaternary structure, homotetramer.

The enzyme catalyses L-glutamine + H2O = L-glutamate + NH4(+). The polypeptide is Glutaminase (glsA) (Corynebacterium efficiens (strain DSM 44549 / YS-314 / AJ 12310 / JCM 11189 / NBRC 100395)).